The primary structure comprises 579 residues: uncharacterized protein (579 aa).

The next 11 membrane-spanning stretches (helical) occupy residues 13–35, 39–61, 66–83, 93–110, 130–152, 162–181, 201–223, 238–257, 264–286, 296–315, and 324–346; these read DLIKQYPLAMSFIFISTAFIPWI, SISRDMIVVLLLPIYFSTVLLLN, ANGLAIAYAILITLAFYF, AYWGLLLIHFVLFVTYPL, LAIVLAGIICICAVLVLNSIEYL, IVPKTLLFIMCFFTPVFFLI, LIVNFIFSPVVILYTLIVYLYLA, YIIMPYIALGLCCQGLRLLL, GFYRVFAYLSIAPLVLLWVGIHT, IRVMLVVLASMMTLFILFSM, and LFSLTACLLLFISTILTSPYYLA.

The protein localises to the cell membrane. This is an uncharacterized protein from Pasteurella multocida (strain Pm70).